The following is a 127-amino-acid chain: Large ribosomal subunit protein bL17 (127 aa).

The protein belongs to the bacterial ribosomal protein bL17 family. As to quaternary structure, part of the 50S ribosomal subunit. Contacts protein L32.

The protein is Large ribosomal subunit protein bL17 of Mannheimia succiniciproducens (strain KCTC 0769BP / MBEL55E).